Consider the following 145-residue polypeptide: D-aminoacyl-tRNA deacylase (145 aa).

The short motif at 137 to 138 is the Gly-cisPro motif, important for rejection of L-amino acids element; it reads GP.

It belongs to the DTD family. In terms of assembly, homodimer.

The protein localises to the cytoplasm. It carries out the reaction glycyl-tRNA(Ala) + H2O = tRNA(Ala) + glycine + H(+). The enzyme catalyses a D-aminoacyl-tRNA + H2O = a tRNA + a D-alpha-amino acid + H(+). Functionally, an aminoacyl-tRNA editing enzyme that deacylates mischarged D-aminoacyl-tRNAs. Also deacylates mischarged glycyl-tRNA(Ala), protecting cells against glycine mischarging by AlaRS. Acts via tRNA-based rather than protein-based catalysis; rejects L-amino acids rather than detecting D-amino acids in the active site. By recycling D-aminoacyl-tRNA to D-amino acids and free tRNA molecules, this enzyme counteracts the toxicity associated with the formation of D-aminoacyl-tRNA entities in vivo and helps enforce protein L-homochirality. The polypeptide is D-aminoacyl-tRNA deacylase (Pseudomonas paraeruginosa (strain DSM 24068 / PA7) (Pseudomonas aeruginosa (strain PA7))).